Here is a 123-residue protein sequence, read N- to C-terminus: Large ribosomal subunit protein bL21 (123 aa).

This sequence belongs to the bacterial ribosomal protein bL21 family. As to quaternary structure, part of the 50S ribosomal subunit. Contacts protein L20.

Its function is as follows. This protein binds to 23S rRNA in the presence of protein L20. The chain is Large ribosomal subunit protein bL21 from Rhizobium meliloti (strain 1021) (Ensifer meliloti).